The chain runs to 506 residues: Arabinose import ATP-binding protein AraG (506 aa).

ABC transporter domains lie at 10–245 and 253–501; these read LEFC…MVGR and YRSR…MLGN. ATP is bound at residue 42 to 49; it reads GENGAGKS.

This sequence belongs to the ABC transporter superfamily. Arabinose importer (TC 3.A.1.2.2) family. In terms of assembly, the complex is composed of two ATP-binding proteins (AraG), two transmembrane proteins (AraH) and a solute-binding protein (AraF).

It localises to the cell inner membrane. It carries out the reaction L-arabinose(out) + ATP + H2O = L-arabinose(in) + ADP + phosphate + H(+). Its function is as follows. Part of the ABC transporter complex AraFGH involved in arabinose import. Responsible for energy coupling to the transport system. This Vibrio parahaemolyticus serotype O3:K6 (strain RIMD 2210633) protein is Arabinose import ATP-binding protein AraG.